The sequence spans 120 residues: Small ribosomal subunit protein uS13m (120 aa).

It belongs to the universal ribosomal protein uS13 family. In terms of assembly, part of the small ribosomal subunit.

It is found in the mitochondrion. Functionally, located at the top of the head of the small subunit, it contacts several helices of the 18S rRNA. This is Small ribosomal subunit protein uS13m (RPS13) from Marchantia polymorpha (Common liverwort).